Consider the following 1094-residue polypeptide: Transcriptional regulator CRZ1 (1094 aa).

4 disordered regions span residues 1–29 (MADP…STSS), 44–81 (FNSD…LDMM), 93–428 (GRRQ…FPPS), and 477–519 (RAGA…RTLS). Basic and acidic residues-rich tracts occupy residues 60–78 (QARK…KRYL) and 94–103 (RRQESLRKES). Phosphoserine is present on Ser-103. Positions 148–159 (PNQPQQPSQQPP) are enriched in low complexity. Composition is skewed to polar residues over residues 166 to 187 (SEQS…QSSG) and 201 to 217 (GTTS…QISP). 2 stretches are compositionally biased toward low complexity: residues 228–241 (QPPQ…QQQQ) and 252–262 (EQQQQYAQGEG). Polar residues predominate over residues 286–324 (VISNTSHPSQYPSRTSSPFPQQSQSNMVPASTVNQTRTE). Phosphoserine occurs at positions 288 and 329. Positions 325–342 (SFPASRSPSPFAPQQASQ) are enriched in low complexity. 2 stretches are compositionally biased toward polar residues: residues 343–379 (TEAS…FNKP) and 396–412 (IVTQ…LNQP). A compositionally biased stretch (low complexity) spans 477 to 493 (RAGAARGAQRQGPQGQG). Positions 507-519 (PSPQSHPLPRTLS) are enriched in polar residues. Phosphoserine is present on residues Ser-508, Ser-569, Ser-765, and Ser-810. The interval 835-888 (ITGDDGSLLPPSNRGHAMSHSRHSSTSSIRSASPALSISSQGSSFSHHSPRMDM) is disordered. Low complexity predominate over residues 858–881 (SSTSSIRSASPALSISSQGSSFSH). The C2H2-type 1 zinc-finger motif lies at 944-968 (FKCPVPGCGSTFTRHFNLKGHLRSH). The C2H2-type 2; degenerate zinc-finger motif lies at 1007–1029 (FECEGCGKKFARLDALTRHHKSE). Residues 1037 to 1094 (THPLPTNFDGSPMSESQYKTYKGIKSTPEGSGRRLSSTASGSGSGKRRSKKSETSEED) are disordered.

In terms of processing, phosphorylated. Dephosphorylated by calcineurin (CNA1) which promotes nuclear localization.

Its subcellular location is the cytoplasm. The protein localises to the cytosol. The protein resides in the nucleus. In terms of biological role, DNA-binding transcriptional activator that interacts with calcineurin-dependent response element (CDRE) promoters. Activates expression of genes required to maintain cell wall integrity during stress. Activates expression of genes required for transepithelial migration through the host blood-brain barrier. Required for adaptation to host temperature during infection. This chain is Transcriptional regulator CRZ1, found in Cryptococcus neoformans var. grubii serotype A (strain H99 / ATCC 208821 / CBS 10515 / FGSC 9487) (Filobasidiella neoformans var. grubii).